Here is a 248-residue protein sequence, read N- to C-terminus: Phycocyanobilin:ferredoxin oxidoreductase (248 aa).

This sequence belongs to the HY2 family.

It carries out the reaction (2R,3Z)-phycocyanobilin + 4 oxidized [2Fe-2S]-[ferredoxin] = biliverdin IXalpha + 4 reduced [2Fe-2S]-[ferredoxin] + 4 H(+). In terms of biological role, catalyzes the four-electron reduction of biliverdin IX-alpha (2-electron reduction at both the A and D rings); the reaction proceeds via an isolatable 2-electron intermediate, 181,182-dihydrobiliverdin. This Synechococcus sp. (strain ATCC 27144 / PCC 6301 / SAUG 1402/1) (Anacystis nidulans) protein is Phycocyanobilin:ferredoxin oxidoreductase.